Consider the following 171-residue polypeptide: Envelope glycoprotein N (171 aa).

Residues 1–132 (MARINSNSGT…CSALKYRIYV (132 aa)) are Virion surface-facing. Residues 133 to 153 (SSFVSVLNIILYVLLFLASVV) form a helical membrane-spanning segment. The Intravirion segment spans residues 154–171 (YIRYLCHQSITTETVKDY).

Belongs to the herpesviridae glycoprotein N family. As to quaternary structure, interacts (via N-terminus) with gM (via N-terminus). The gM-gN heterodimer forms the gCII complex.

The protein resides in the virion membrane. The protein localises to the host membrane. It localises to the host Golgi apparatus. It is found in the host trans-Golgi network. Its function is as follows. Envelope glycoprotein necessary for proper maturation of gM and modulation of its membrane fusion activity. Also plays a critical role in virion morphogenesis. In Elephas maximus (Indian elephant), this protein is Envelope glycoprotein N.